Here is a 448-residue protein sequence, read N- to C-terminus: Histidine--tRNA ligase (448 aa).

2 disordered regions span residues 1-20 and 428-448; these read MAIK…SPKL and AGQA…QEKA.

This sequence belongs to the class-II aminoacyl-tRNA synthetase family. Homodimer.

The protein resides in the cytoplasm. It catalyses the reaction tRNA(His) + L-histidine + ATP = L-histidyl-tRNA(His) + AMP + diphosphate + H(+). This chain is Histidine--tRNA ligase, found in Deinococcus deserti (strain DSM 17065 / CIP 109153 / LMG 22923 / VCD115).